A 687-amino-acid chain; its full sequence is Glycine--tRNA ligase beta subunit (687 aa).

This sequence belongs to the class-II aminoacyl-tRNA synthetase family. Tetramer of two alpha and two beta subunits.

Its subcellular location is the cytoplasm. It carries out the reaction tRNA(Gly) + glycine + ATP = glycyl-tRNA(Gly) + AMP + diphosphate. In Neisseria meningitidis serogroup C (strain 053442), this protein is Glycine--tRNA ligase beta subunit.